A 369-amino-acid polypeptide reads, in one-letter code: Chorismate synthase (369 aa).

NADP(+) contacts are provided by R48 and R54. FMN-binding positions include 125-127, 238-239, G278, 293-297, and R319; these read RSS, NA, and KPTSS.

This sequence belongs to the chorismate synthase family. Homotetramer. It depends on FMNH2 as a cofactor.

The enzyme catalyses 5-O-(1-carboxyvinyl)-3-phosphoshikimate = chorismate + phosphate. It functions in the pathway metabolic intermediate biosynthesis; chorismate biosynthesis; chorismate from D-erythrose 4-phosphate and phosphoenolpyruvate: step 7/7. In terms of biological role, catalyzes the anti-1,4-elimination of the C-3 phosphate and the C-6 proR hydrogen from 5-enolpyruvylshikimate-3-phosphate (EPSP) to yield chorismate, which is the branch point compound that serves as the starting substrate for the three terminal pathways of aromatic amino acid biosynthesis. This reaction introduces a second double bond into the aromatic ring system. This chain is Chorismate synthase, found in Cupriavidus necator (strain ATCC 17699 / DSM 428 / KCTC 22496 / NCIMB 10442 / H16 / Stanier 337) (Ralstonia eutropha).